A 660-amino-acid polypeptide reads, in one-letter code: Acetyl-coenzyme A synthetase (660 aa).

CoA-binding positions include 197 to 200 (RGGK) and Thr317. ATP contacts are provided by residues 397–399 (GEP), 421–426 (DTFWQT), Asp512, and Arg528. CoA is bound at residue Ser536. Arg539 contributes to the ATP binding site. Positions 550 and 555 each coordinate Mg(2+). The residue at position 625 (Lys625) is an N6-acetyllysine.

Belongs to the ATP-dependent AMP-binding enzyme family. Requires Mg(2+) as cofactor. Acetylated. Deacetylation by the SIR2-homolog deacetylase activates the enzyme.

It carries out the reaction acetate + ATP + CoA = acetyl-CoA + AMP + diphosphate. Catalyzes the conversion of acetate into acetyl-CoA (AcCoA), an essential intermediate at the junction of anabolic and catabolic pathways. AcsA undergoes a two-step reaction. In the first half reaction, AcsA combines acetate with ATP to form acetyl-adenylate (AcAMP) intermediate. In the second half reaction, it can then transfer the acetyl group from AcAMP to the sulfhydryl group of CoA, forming the product AcCoA. The protein is Acetyl-coenzyme A synthetase of Ralstonia pickettii (strain 12J).